The chain runs to 111 residues: Large ribosomal subunit protein uL22 (111 aa).

Belongs to the universal ribosomal protein uL22 family. Part of the 50S ribosomal subunit.

Its function is as follows. This protein binds specifically to 23S rRNA; its binding is stimulated by other ribosomal proteins, e.g. L4, L17, and L20. It is important during the early stages of 50S assembly. It makes multiple contacts with different domains of the 23S rRNA in the assembled 50S subunit and ribosome. Functionally, the globular domain of the protein is located near the polypeptide exit tunnel on the outside of the subunit, while an extended beta-hairpin is found that lines the wall of the exit tunnel in the center of the 70S ribosome. This Xanthomonas oryzae pv. oryzae (strain PXO99A) protein is Large ribosomal subunit protein uL22.